The following is a 141-amino-acid chain: ER membrane protein complex subunit 5 (141 aa).

Over 1–6 (MSFVSK) the chain is Cytoplasmic. The chain crosses the membrane as a helical span at residues 7–27 (LLYTVSALVLFHSGFSSYEFH). Residues 28 to 48 (HLLKLNSLNNAQGAISKLPKD) lie on the Lumenal side of the membrane. The helical transmembrane segment at 49–69 (IMYETYAGLILFVLAVFTSFE) threads the bilayer. Residues 70–141 (KLQYLPIESN…WASNTVKKEK (72 aa)) are Cytoplasmic-facing.

Belongs to the membrane magnesium transporter (TC 1.A.67) family. In terms of assembly, component of the ER membrane protein complex (EMC), which is composed of EMC1, EMC2, EMC3, EMC4, EMC5 and EMC6.

It is found in the endoplasmic reticulum membrane. In terms of biological role, part of the endoplasmic reticulum membrane protein complex (EMC) that enables the energy-independent insertion into endoplasmic reticulum membranes of newly synthesized membrane proteins. Preferentially accommodates proteins with transmembrane domains that are weakly hydrophobic or contain destabilizing features such as charged and aromatic residues. Involved in the cotranslational insertion of multi-pass membrane proteins in which stop-transfer membrane-anchor sequences become ER membrane spanning helices. It is also required for the post-translational insertion of tail-anchored/TA proteins in endoplasmic reticulum membranes. By mediating the proper cotranslational insertion of N-terminal transmembrane domains in an N-exo topology, with translocated N-terminus in the lumen of the ER, controls the topology of multi-pass membrane proteins. The chain is ER membrane protein complex subunit 5 (EMC5) from Saccharomyces cerevisiae (strain ATCC 204508 / S288c) (Baker's yeast).